The primary structure comprises 117 residues: UPF0122 protein TTE1463 (117 aa).

Belongs to the UPF0122 family.

Its function is as follows. Might take part in the signal recognition particle (SRP) pathway. This is inferred from the conservation of its genetic proximity to ftsY/ffh. May be a regulatory protein. The chain is UPF0122 protein TTE1463 from Caldanaerobacter subterraneus subsp. tengcongensis (strain DSM 15242 / JCM 11007 / NBRC 100824 / MB4) (Thermoanaerobacter tengcongensis).